Consider the following 213-residue polypeptide: Motile sperm domain-containing protein 1 (213 aa).

The region spanning 16–143 (PVFVFPTELI…KEHLTESLFF (128 aa)) is the MSP domain. 2 consecutive transmembrane segments (helical) span residues 159–179 (SLLTVFLGVVCIAALMLPTLG) and 191–211 (LSVNQKLVAAYILGLITMAIL). The short motif at 205–208 (LITM) is the Nuclear export signal element.

The protein resides in the endoplasmic reticulum membrane. Its subcellular location is the golgi apparatus membrane. Its function is as follows. Plays a role in differentiation and/or proliferation of mesenchymal stem cells. Proposed to be involved in epithelial-to-mesenchymal transition (EMT). However, another study suggests that it is not required for EMT or stem cell self-renewal and acts during later stages of differentiation. In Homo sapiens (Human), this protein is Motile sperm domain-containing protein 1 (MOSPD1).